A 392-amino-acid polypeptide reads, in one-letter code: 8-amino-7-oxononanoate synthase (392 aa).

Arginine 21 contacts substrate. 114–115 is a pyridoxal 5'-phosphate binding site; the sequence is GY. Histidine 139 serves as a coordination point for substrate. Pyridoxal 5'-phosphate is bound by residues serine 187, 212–215, and 243–246; these read DEAH and TFGK. At lysine 246 the chain carries N6-(pyridoxal phosphate)lysine. Substrate is bound at residue threonine 359.

It belongs to the class-II pyridoxal-phosphate-dependent aminotransferase family. BioF subfamily. As to quaternary structure, homodimer. The cofactor is pyridoxal 5'-phosphate.

The catalysed reaction is 6-carboxyhexanoyl-[ACP] + L-alanine + H(+) = (8S)-8-amino-7-oxononanoate + holo-[ACP] + CO2. Its pathway is cofactor biosynthesis; biotin biosynthesis. Functionally, catalyzes the decarboxylative condensation of pimeloyl-[acyl-carrier protein] and L-alanine to produce 8-amino-7-oxononanoate (AON), [acyl-carrier protein], and carbon dioxide. This chain is 8-amino-7-oxononanoate synthase, found in Chlorobaculum parvum (strain DSM 263 / NCIMB 8327) (Chlorobium vibrioforme subsp. thiosulfatophilum).